The chain runs to 201 residues: Ribonuclease HII (201 aa).

In terms of domain architecture, RNase H type-2 spans 15–201; it reads QRVAGVDEVG…FRPVRRFLEA (187 aa). The a divalent metal cation site is built by Asp21, Glu22, and Asp113.

It belongs to the RNase HII family. It depends on Mn(2+) as a cofactor. Mg(2+) serves as cofactor.

It is found in the cytoplasm. The enzyme catalyses Endonucleolytic cleavage to 5'-phosphomonoester.. Endonuclease that specifically degrades the RNA of RNA-DNA hybrids. This chain is Ribonuclease HII, found in Nitrosococcus oceani (strain ATCC 19707 / BCRC 17464 / JCM 30415 / NCIMB 11848 / C-107).